Here is a 762-residue protein sequence, read N- to C-terminus: Protein PHTF1 (762 aa).

Residues 6-150 (RDAISWYQKK…VHCQIVSTQI (145 aa)) form the PHTF domain. 3 consecutive transmembrane segments (helical) span residues 77–97 (GLVRVVFFPLFSNWWIQVTSL), 99–119 (IFVWLLLLYFMQVIAIVLYLM), and 121–141 (PIVNISEVLGPLCLMLLMGTV). The disordered stretch occupies residues 152-184 (RPSGNNGNRRRRKLRKTVNGDGSRENGNNSSDK). Asparagine 179 and asparagine 180 each carry an N-linked (GlcNAc...) asparagine glycan. Phosphoserine is present on residues serine 272, serine 276, serine 277, serine 334, and serine 336. 2 disordered regions span residues 344–380 (SAAFSQGSRSGVSGGSRSLNMSRRDSESTRHDSETED) and 393–415 (RSSVTSDSEGAHVNTLHSGTKRD). The segment covering 348–361 (SQGSRSGVSGGSRS) has biased composition (low complexity). A glycan (N-linked (GlcNAc...) asparagine) is linked at asparagine 363. The span at 365–376 (SRRDSESTRHDS) shows a compositional bias: basic and acidic residues. Asparagine 431 is a glycosylation site (N-linked (GlcNAc...) asparagine). Transmembrane regions (helical) follow at residues 473 to 493 (GVGYQMLGNVVTIGLAFFPFL), 512 to 532 (EILTLFCGAPPVTPIIVLSII), 611 to 631 (VVVSSVFLLTLSIAFICCAQV), and 645 to 665 (WEFLIWETALLLFLLRLASLG). N-linked (GlcNAc...) asparagine glycans are attached at residues asparagine 674 and asparagine 733. Residues 737-757 (VVILSAVSGVISDLLGFNIRL) form a helical membrane-spanning segment.

Interacts with FEM1B. As to expression, widely expressed with highest levels in testis.

It localises to the endoplasmic reticulum membrane. The protein localises to the golgi apparatus. The protein resides in the cis-Golgi network membrane. This is Protein PHTF1 from Homo sapiens (Human).